The sequence spans 211 residues: BAG family molecular chaperone regulator 2 (211 aa).

Ala-2 carries the N-acetylalanine modification. 3 positions are modified to phosphoserine: Ser-20, Ser-31, and Ser-73. Positions 20 to 61 (SMADRSSRLLESLDQLELRVEALREAATAVEQEKEILLEMIH) form a coiled coil. In terms of domain architecture, BAG spans 109 to 189 (SLKHATRIID…NIENSDKAIK (81 aa)).

As to quaternary structure, binds to the ATPase domain of HSP/HSC70 chaperones. May interact with NWD1. Interacts with HSPA1A (via NBD), HSPA1B (via NBD) and HSPA8. May interact with DNJC9; the interaction seems to be histone-dependent.

Its function is as follows. Co-chaperone for HSP70 and HSC70 chaperone proteins. Acts as a nucleotide-exchange factor (NEF) promoting the release of ADP from the HSP70 and HSC70 proteins thereby triggering client/substrate protein release. The protein is BAG family molecular chaperone regulator 2 (BAG2) of Homo sapiens (Human).